A 403-amino-acid chain; its full sequence is Cystinosin homolog (403 aa).

Topologically, residues 1-122 (MKLPVSILFF…YSRITVIRSH (122 aa)) are lumenal. Residues N45, N52, N78, and N96 are each glycosylated (N-linked (GlcNAc...) asparagine). Residues 123–143 (WLAILIQIVGWTYFAAWSVSF) traverse the membrane as a helical segment. One can recognise a PQ-loop 1 domain in the interval 124-190 (LAILIQIVGW…MYYNSHVKNI (67 aa)). Over 144 to 162 (YPQMYLNFKRKSVVGLNFD) the chain is Cytoplasmic. Residues 163-183 (FLSLNLVGFGAYAMFNLLMYY) form a helical membrane-spanning segment. Residues 184–206 (NSHVKNIYSMENPRSPPPVLLND) are Lumenal-facing. Residues 207-227 (VVFAVHAFLACFVTILQCIFY) form a helical membrane-spanning segment. The Cytoplasmic portion of the chain corresponds to 228–237 (ERDQQRISTK). The chain crosses the membrane as a helical span at residues 238–258 (CIILIIGLVSFGFVSVVVTVL). Over 259-260 (NK) the chain is Lumenal. A helical transmembrane segment spans residues 261 to 283 (ITILDFVVSLSYIKMAVTCCKYF). Positions 266-326 (FVVSLSYIKM…MVLQAINVND (61 aa)) constitute a PQ-loop 2 domain. Residues 284–294 (PQAYFNYQRKS) are Cytoplasmic-facing. The helical transmembrane segment at 295 to 315 (TVGWSIGNILLDFTGGSLDIL) threads the bilayer. Topologically, residues 316–336 (QMVLQAINVNDWSAFYANPVK) are lumenal. A helical membrane pass occupies residues 337-357 (FGLGFVSIFFDIIFMIQHYAL). The Cytoplasmic segment spans residues 358–403 (YPDAEVPHNEYHGVDNPDPDSIVRDAEHGAADNESMESTDPIIVHD). Residues 374 to 388 (PDPDSIVRDAEHGAA) show a composition bias toward basic and acidic residues. Positions 374 to 403 (PDPDSIVRDAEHGAADNESMESTDPIIVHD) are disordered.

This sequence belongs to the cystinosin family.

It localises to the lysosome membrane. Its subcellular location is the cytoplasmic vesicle. The protein resides in the phagosome. It catalyses the reaction L-cystine(out) + H(+)(out) = L-cystine(in) + H(+)(in). Cystine/H(+) symporter that mediates export of cystine, the oxidized dimer of cysteine, from lysosomes. May play a role in the degradation of engulfed apoptotic cells. The chain is Cystinosin homolog (ctns-1) from Caenorhabditis briggsae.